A 94-amino-acid polypeptide reads, in one-letter code: Ferredoxin-like protein (94 aa).

2 consecutive 4Fe-4S ferredoxin-type domains span residues 20–52 (PHIR…RETN) and 53–83 (GKVT…WEWP).

It to ferredoxins from P.putida and C.tartarivorum, ferredoxin I from A.vinelandii, ferredoxin II from D.desulfuricans.

Functionally, could be a 3Fe-4S cluster-containing protein. The polypeptide is Ferredoxin-like protein (fixX) (Azotobacter vinelandii).